The following is a 249-amino-acid chain: Aquaporin SIP2-1 (249 aa).

Transmembrane regions (helical) follow at residues P12–V32 and V53–A73. The NPA 1 motif lies at N76 to L78. 4 helical membrane passes run A104–G124, A133–K155, I176–W196, and L210–F230. The NPA 2 signature appears at N189–A191.

The protein belongs to the MIP/aquaporin (TC 1.A.8) family. SIP (TC 1.A.8.10) subfamily.

It localises to the membrane. Aquaporins facilitate the transport of water and small neutral solutes across cell membranes. This Zea mays (Maize) protein is Aquaporin SIP2-1 (SIP2-1).